We begin with the raw amino-acid sequence, 55 residues long: uncharacterized protein (55 aa).

Residues 27–47 (IFLIYHFSPIYCPYLFLFTVF) traverse the membrane as a helical segment.

The protein localises to the membrane. This is an uncharacterized protein from Acheta domesticus (House cricket).